The chain runs to 776 residues: Cullin-1 (776 aa).

R63 bears the Omega-N-methylarginine mark. One can recognise a Cullin neddylation domain in the interval 706 to 766 (DRKLLIQAAI…IEKEYLERVD (61 aa)). A Glycyl lysine isopeptide (Lys-Gly) (interchain with G-Cter in NEDD8) cross-link involves residue K720.

This sequence belongs to the cullin family. Component of multiple Cul1-RING E3 ubiquitin-protein ligase complexes commonly known as SCF (SKP1-CUL1-F-box) complexes, consisting of CUL1, SKP1, RBX1 and a variable F-box domain-containing protein as substrate-specific subunit. Component of the SCF(FBXW11) complex containing FBXW11. Component of the SCF(SKP2) complex containing SKP2, in which it interacts directly with SKP1, SKP2 and RBX1. Component of the SCF(FBXW2) complex containing FBXW2. Component of the SCF(FBXO32) complex containing FBXO32. Component of the probable SCF(FBXO7) complex containing FBXO7. Component of the SCF(FBXO10) complex containing FBXO10. Component of the SCF(FBXO11) complex containing FBXO11. Component of the SCF(FBXO25) complex containing FBXO25. Component of the SCF(FBXO33) complex containing FBXO33. Component of the probable SCF(FBXO4) complex containing FBXO4. Component of the SCF(FBXO44) complex, composed of SKP1, CUL1 and FBXO44. Component of the SCF(BTRC) complex, composed of SKP1, CUL1 and BTRC. This complex binds phosphorylated NFKBIA. Part of a SCF complex consisting of CUL1, RBX1, SKP1 and FBXO2. Component of a SCF(SKP2)-like complex containing CUL1, SKP1, TRIM21 and SKP2. Component of the SCF(FBXO17) complex, composed of SKP1, CUL1 and FBXO17. Component of the SCF(FBXO27) complex, composed of SKP1, CUL1 and FBXO27. Component of the SCF(CCNF) complex consisting of CUL1, RBX1, SKP1 and CCNF. Interacts with CCNF. Component of the SCF(FBXL3) complex composed of CUL1, SKP1, RBX1 and FBXL3. Component of the SCF(FBXL21) complex composed of CUL1, SKP1, RBX1 and FBXL21. Component of the SCF(FBXO9) composed of CUL1, SKP1, RBX1 and FBXO9. Component of the SCF(FBXW7) composed of CUL1, SKP1, RBX1 and FBXW7. Component of the SCF(FBXO31) complex composed of CUL1, SKP1, RBX1 and FBXO31. Interacts with CHEK2; mediates CHEK2 ubiquitination and regulates its function. Part of a complex with TIP120A/CAND1 and RBX1. The unneddylated form interacts with TIP120A/CAND1 and the interaction mediates the exchange of the F-box substrate-specific subunit. Can self-associate. Interacts with FBXW8. Interacts with RNF7. Interacts with TRIM21. Interacts with COPS2. Interacts with UBE2M. Identified in a complex with RBX1 and GLMN. Interacts with CEP68 as part of the SCF(FBXW11) complex; the interaction is probably mediated by FBXW11 and the complex also contains CDK5RAP2 and PCNT. Interacts (when neddylated) with ARIH1; leading to activate the E3 ligase activity of ARIH1. Interacts with COPS9 isoform 2. Interacts with UBXN1. Interacts with KAT7, probably as part of an SCF complex; the interaction mediates KAT7 ubiquitination. Interacts with NOTCH2. Part of a complex that contains DCUN1D5, CUL1 and RBX1; this complex is bridged by CUL1. Interacts (unneddylated form) with DCUN1D1, DCUN1D2, DCUN1D3, DCUN1D4 and DCUN1D5; these interactions promote the cullin neddylation. Interacts (via the C-terminal domain) with CUL7; the interaction seems to be mediated by FBXW8; it is likely specific to FBXW8, but not other F-box proteins. Interacts with UBR2, as part of SCF(BTRC) complex; the interaction mediates 'Lys-48'-linked ubiquitination of UBR2 and is regulated by DUSP22 in the T-cell receptor signaling pathway. As to quaternary structure, (Microbial infection) Interacts with Epstein-Barr virus BPLF1. In terms of assembly, (Microbial infection) Interacts with Human adenovirus early E1A protein; this interaction inhibits RBX1-CUL1-dependent elongation reaction of ubiquitin chains by the SCF(FBXW7) complex. (Microbial infection) Interacts with vaccinia virus protein C9L. As to quaternary structure, (Microbial infection) Interacts with Epstein-Barr virus (EBV) tegument protein BGLF2; this interaction might facilitate CUL1 recruitment to STAT2, leading to ubiquitination and degradation of the latter. Neddylated; which enhances the ubiquitination activity of SCF. Neddylation prevents binding of the inhibitor CAND1. Neddylation leads to structural rearrangment in the complex that allows interaction between the E2 ubiquitin-conjugating enzyme and the acceptor ubiquitin. Deneddylated via its interaction with the COP9 signalosome (CSN) complex. Post-translationally, (Microbial infection) Deneddylated by Epstein-Barr virus BPLF1 leading to a S-phase-like environment that is required for efficient replication of the viral genome. Expressed in lung fibroblasts.

It functions in the pathway protein modification; protein ubiquitination. Its function is as follows. Core component of multiple cullin-RING-based SCF (SKP1-CUL1-F-box protein) E3 ubiquitin-protein ligase complexes, which mediate the ubiquitination of proteins involved in cell cycle progression, signal transduction and transcription. SCF complexes and ARIH1 collaborate in tandem to mediate ubiquitination of target proteins. In the SCF complex, serves as a rigid scaffold that organizes the SKP1-F-box protein and RBX1 subunits. May contribute to catalysis through positioning of the substrate and the ubiquitin-conjugating enzyme. The E3 ubiquitin-protein ligase activity of the complex is dependent on the neddylation of the cullin subunit and exchange of the substrate recognition component is mediated by TIP120A/CAND1. The functional specificity of the SCF complex depends on the F-box protein as substrate recognition component. SCF(BTRC) and SCF(FBXW11) direct ubiquitination of CTNNB1 and participate in Wnt signaling. SCF(FBXW11) directs ubiquitination of phosphorylated NFKBIA. SCF(BTRC) directs ubiquitination of NFKBIB, NFKBIE, ATF4, SMAD3, SMAD4, CDC25A, FBXO5 and probably NFKB2. SCF(BTRC) and/or SCF(FBXW11) direct ubiquitination of CEP68. SCF(SKP2) directs ubiquitination of phosphorylated CDKN1B/p27kip and is involved in regulation of G1/S transition. SCF(SKP2) directs ubiquitination of ORC1, CDT1, RBL2, ELF4, CDKN1A, RAG2, FOXO1A, and probably MYC and TAL1. SCF(FBXW7) directs ubiquitination of CCNE1, NOTCH1 released notch intracellular domain (NICD), and probably PSEN1. SCF(FBXW2) directs ubiquitination of GCM1. SCF(FBXO32) directs ubiquitination of MYOD1. SCF(FBXO7) directs ubiquitination of BIRC2 and DLGAP5. SCF(FBXO33) directs ubiquitination of YBX1. SCF(FBXO1) directs ubiquitination of BCL6 and DTL but does not seem to direct ubiquitination of TP53. SCF(BTRC) mediates the ubiquitination of NFKBIA at 'Lys-21' and 'Lys-22'; the degradation frees the associated NFKB1-RELA dimer to translocate into the nucleus and to activate transcription. SCF(CCNF) directs ubiquitination of CCP110. SCF(FBXL3) and SCF(FBXL21) direct ubiquitination of CRY1 and CRY2. SCF(FBXO9) directs ubiquitination of TTI1 and TELO2. SCF(FBXO10) directs ubiquitination of BCL2. Neddylated CUL1-RBX1 ubiquitinates p53/TP53 recruited by Cul7-RING(FBXW8) complex. SCF(BTRC) directs 'Lys-48'-linked ubiquitination of UBR2 in the T-cell receptor signaling pathway. The SCF(FBXO31) protein ligase complex specifically mediates the ubiquitination of proteins amidated at their C-terminus in response to oxidative stress. The polypeptide is Cullin-1 (CUL1) (Homo sapiens (Human)).